We begin with the raw amino-acid sequence, 343 residues long: L-threonine 3-dehydrogenase (343 aa).

Residue Cys40 participates in Zn(2+) binding. Residues Thr42 and His45 each act as charge relay system in the active site. Residues His65, Glu66, Cys95, Cys98, Cys101, and Cys109 each coordinate Zn(2+). NAD(+) is bound by residues Ile177, Asp197, Arg202, 264–266 (LGI), and 288–289 (IY).

Belongs to the zinc-containing alcohol dehydrogenase family. In terms of assembly, homotetramer. The cofactor is Zn(2+).

Its subcellular location is the cytoplasm. It carries out the reaction L-threonine + NAD(+) = (2S)-2-amino-3-oxobutanoate + NADH + H(+). Its pathway is amino-acid degradation; L-threonine degradation via oxydo-reductase pathway; glycine from L-threonine: step 1/2. Functionally, catalyzes the NAD(+)-dependent oxidation of L-threonine to 2-amino-3-ketobutyrate. This is L-threonine 3-dehydrogenase from Vibrio vulnificus (strain YJ016).